The chain runs to 80 residues: Growth factor (80 aa).

A signal peptide spans 1 to 19 (MATRNLVASLLCIMYAVHA). The EGF-like domain maps to 29 to 73 (HVKVCNHDYENYCLNNGTCFTIALDNVSITPFCVCRINYEGSRCQ). 3 disulfide bridges follow: Cys33–Cys47, Cys41–Cys61, and Cys63–Cys72. 2 N-linked (GlcNAc...) asparagine; by host glycosylation sites follow: Asn44 and Asn54.

It localises to the secreted. The chain is Growth factor from Oryctolagus cuniculus (Rabbit).